The primary structure comprises 375 residues: Queuine tRNA-ribosyltransferase (375 aa).

Asp89 serves as the catalytic Proton acceptor. Substrate is bound by residues 89–93 (DSGGF), Asp143, Gln187, and Gly214. Positions 245-251 (GVGKPED) are RNA binding. The Nucleophile role is filled by Asp264. The interval 269 to 273 (TRNAR) is RNA binding; important for wobble base 34 recognition. 4 residues coordinate Zn(2+): Cys302, Cys304, Cys307, and His333.

The protein belongs to the queuine tRNA-ribosyltransferase family. As to quaternary structure, homodimer. Within each dimer, one monomer is responsible for RNA recognition and catalysis, while the other monomer binds to the replacement base PreQ1. It depends on Zn(2+) as a cofactor.

It carries out the reaction 7-aminomethyl-7-carbaguanine + guanosine(34) in tRNA = 7-aminomethyl-7-carbaguanosine(34) in tRNA + guanine. It functions in the pathway tRNA modification; tRNA-queuosine biosynthesis. In terms of biological role, catalyzes the base-exchange of a guanine (G) residue with the queuine precursor 7-aminomethyl-7-deazaguanine (PreQ1) at position 34 (anticodon wobble position) in tRNAs with GU(N) anticodons (tRNA-Asp, -Asn, -His and -Tyr). Catalysis occurs through a double-displacement mechanism. The nucleophile active site attacks the C1' of nucleotide 34 to detach the guanine base from the RNA, forming a covalent enzyme-RNA intermediate. The proton acceptor active site deprotonates the incoming PreQ1, allowing a nucleophilic attack on the C1' of the ribose to form the product. After dissociation, two additional enzymatic reactions on the tRNA convert PreQ1 to queuine (Q), resulting in the hypermodified nucleoside queuosine (7-(((4,5-cis-dihydroxy-2-cyclopenten-1-yl)amino)methyl)-7-deazaguanosine). The sequence is that of Queuine tRNA-ribosyltransferase from Klebsiella pneumoniae subsp. pneumoniae (strain ATCC 700721 / MGH 78578).